Reading from the N-terminus, the 80-residue chain is Adipogenin (80 aa).

The chain crosses the membrane as a helical span at residues 16-36 (FLVFWLCLPVALLLFLTIVWL). The residue at position 63 (S63) is a Phosphoserine.

It belongs to the adipogenin family. In terms of tissue distribution, selectively expressed in adipose tissue where it is particularly enriched in brown adipose tissue. In adipose tissue, expressed exclusively in adipocytes and not in the stromal-vascular cell population. Expressed at much lower levels in heart, stomach and muscle and barely detected in kidney and lung.

The protein resides in the membrane. Its subcellular location is the nucleus. Functionally, plays a role in stimulating adipocyte differentiation and development. This is Adipogenin (Adig) from Mus musculus (Mouse).